We begin with the raw amino-acid sequence, 274 residues long: Elongation factor Ts (274 aa).

The interval 79–82 (TDFV) is involved in Mg(2+) ion dislocation from EF-Tu.

It belongs to the EF-Ts family.

The protein localises to the cytoplasm. In terms of biological role, associates with the EF-Tu.GDP complex and induces the exchange of GDP to GTP. It remains bound to the aminoacyl-tRNA.EF-Tu.GTP complex up to the GTP hydrolysis stage on the ribosome. The protein is Elongation factor Ts of Porphyromonas gingivalis (strain ATCC 33277 / DSM 20709 / CIP 103683 / JCM 12257 / NCTC 11834 / 2561).